Here is a 289-residue protein sequence, read N- to C-terminus: Dermonecrotic toxin LarSicTox-betaID1 (289 aa).

A signal peptide spans 1–2 (EG). A propeptide spanning residues 3–11 (AEQDGSERT) is cleaved from the precursor. H22 is a catalytic residue. Mg(2+)-binding residues include E42 and D44. H58 serves as the catalytic Nucleophile. Intrachain disulfides connect C62-C68 and C64-C207. D102 provides a ligand contact to Mg(2+).

Belongs to the arthropod phospholipase D family. Class II subfamily. Requires Mg(2+) as cofactor. In terms of tissue distribution, expressed by the venom gland.

The protein localises to the secreted. It catalyses the reaction an N-(acyl)-sphingosylphosphocholine = an N-(acyl)-sphingosyl-1,3-cyclic phosphate + choline. It carries out the reaction N-hexanoyl-sphing-4-enine-1-phosphocholine = N-(hexanoyl)-sphing-4-enine-1,3-cyclic phosphate + choline. The catalysed reaction is N-(dodecanoyl)-sphing-4-enine-1-phosphocholine = N-dodecanoyl-sphing-4-enine-1,3-cyclic phosphate + choline. The enzyme catalyses an N-(acyl)-sphingosylphosphoethanolamine = an N-(acyl)-sphingosyl-1,3-cyclic phosphate + ethanolamine. It catalyses the reaction N-dodecanoyl-heptadecasphing-4-enine-1-phosphoethanolamine = N-dodecanoyl-heptadecasphing-4-enine-1,3-cyclic phosphate + ethanolamine. It carries out the reaction a 1-acyl-sn-glycero-3-phosphocholine = a 1-acyl-sn-glycero-2,3-cyclic phosphate + choline. The catalysed reaction is 1-tetradecanoyl-sn-glycero-3-phosphocholine = 1-tetradecanoyl-sn-glycero-2,3-cyclic phosphate + choline. The enzyme catalyses 1-octanoyl-sn-glycero-3-phosphocholine = 1-octanoyl-sn-glycero-2,3-cyclic phosphate + choline. It catalyses the reaction a 1-acyl-sn-glycero-3-phosphoethanolamine = a 1-acyl-sn-glycero-2,3-cyclic phosphate + ethanolamine. It carries out the reaction 1-tetradecanoyl-sn-glycero-3-phosphoethanolamine = 1-tetradecanoyl-sn-glycero-2,3-cyclic phosphate + ethanolamine. Its function is as follows. Dermonecrotic toxins cleave the phosphodiester linkage between the phosphate and headgroup of certain phospholipids (sphingolipid and lysolipid substrates), forming an alcohol (often choline) and a cyclic phosphate. This toxin acts on sphingomyelin (SM) and on ceramide phosphoethanolamine (CPE) with high activity. It also acts on lysophosphatidylcholine (LPC) and on lysophosphatidylethanolamine (LPE) with moderate activity. It is not active on lysophosphatidylserine (LPS), and lysophosphatidylglycerol (LPG). It acts by transphosphatidylation, releasing exclusively cyclic phosphate as second products. It is not surprising that spider toxins have affinity for ethanolamine-containing sphingolipids since they are common in insect prey. On mammals, induces dermonecrosis, hemolysis, increased vascular permeability, edema, inflammatory response, and platelet aggregation. The polypeptide is Dermonecrotic toxin LarSicTox-betaID1 (Loxosceles arizonica (Arizona brown spider)).